A 203-amino-acid polypeptide reads, in one-letter code: NAD(P)H dehydrogenase (quinone) (203 aa).

A Flavodoxin-like domain is found at 3-194 (VLIVYYSLYG…DAARFQGRHI (192 aa)). FMN-binding positions include 9–14 (SLYGHV) and 82–84 (TRF). Y11 contacts NAD(+). W102 serves as a coordination point for substrate. Residues 117–123 (STATQHG) and H138 contribute to the FMN site.

This sequence belongs to the WrbA family. It depends on FMN as a cofactor.

The enzyme catalyses a quinone + NADH + H(+) = a quinol + NAD(+). It catalyses the reaction a quinone + NADPH + H(+) = a quinol + NADP(+). This Solidesulfovibrio magneticus (strain ATCC 700980 / DSM 13731 / RS-1) (Desulfovibrio magneticus) protein is NAD(P)H dehydrogenase (quinone).